The primary structure comprises 356 residues: sn-glycerol-3-phosphate import ATP-binding protein UgpC (356 aa).

The 232-residue stretch at 4–235 (LKLQAVTKSW…PASLFVASFI (232 aa)) folds into the ABC transporter domain. 37 to 44 (GPSGCGKS) is an ATP binding site.

It belongs to the ABC transporter superfamily. sn-glycerol-3-phosphate importer (TC 3.A.1.1.3) family. In terms of assembly, the complex is composed of two ATP-binding proteins (UgpC), two transmembrane proteins (UgpA and UgpE) and a solute-binding protein (UgpB).

It is found in the cell inner membrane. The enzyme catalyses sn-glycerol 3-phosphate(out) + ATP + H2O = sn-glycerol 3-phosphate(in) + ADP + phosphate + H(+). The catalysed reaction is glycerol 2-phosphate(out) + ATP + H2O = glycerol 2-phosphate(in) + ADP + phosphate + H(+). Its activity is regulated as follows. ATPase activity is stimulated when UgpB is bound to G3P. Transport is inhibited in vivo by increasing levels of internal phosphate. However, ATPase activity in proteoliposomes is neither inhibited by phosphate nor by the signal transducing protein PhoU or the phosphodiesterase UgpQ. Activated by gluconate and inhibited by fumarate. Functionally, part of the ABC transporter complex UgpBAEC involved in sn-glycerol-3-phosphate (G3P) import. Responsible for energy coupling to the transport system. Can also transport glycerophosphoryl diesters, which are hydrolyzed to G3P and alcohol during transport. The G3P moiety can be detected in the cytoplasm whereas the corresponding alcohol is usually found in the culture medium. It was proposed by Yang et al that the complex could also transport glycerol-2-phosphate (G2P) in vivo, but it was shown later by Wuttge et al that UgpB does not bind G2P, questioning this transport activity. G2P might be converted in the periplasm to G3P before its transport. The protein is sn-glycerol-3-phosphate import ATP-binding protein UgpC of Escherichia coli (strain K12).